The chain runs to 261 residues: L-erythrulose-1-phosphate isomerase (261 aa).

His99 (electrophile) is an active-site residue. Glu172 acts as the Proton acceptor in catalysis.

This sequence belongs to the triosephosphate isomerase family.

It carries out the reaction L-erythrulose 1-phosphate = D-erythrulose 4-phosphate. It functions in the pathway carbohydrate metabolism. Functionally, involved in catabolism of D-apiose. Catalyzes the isomerization of L-erythrulose 1-phosphate to D-erythrulose 4-phosphate. The polypeptide is L-erythrulose-1-phosphate isomerase (Rhizobium rhizogenes (strain K84 / ATCC BAA-868) (Agrobacterium radiobacter)).